Reading from the N-terminus, the 309-residue chain is Aspartate carbamoyltransferase catalytic subunit (309 aa).

Residues arginine 55 and threonine 56 each coordinate carbamoyl phosphate. An L-aspartate-binding site is contributed by lysine 85. Arginine 106, histidine 135, and glutamine 138 together coordinate carbamoyl phosphate. Residues arginine 168 and arginine 230 each coordinate L-aspartate. Residues leucine 268 and proline 269 each contribute to the carbamoyl phosphate site.

The protein belongs to the aspartate/ornithine carbamoyltransferase superfamily. ATCase family. As to quaternary structure, heterododecamer (2C3:3R2) of six catalytic PyrB chains organized as two trimers (C3), and six regulatory PyrI chains organized as three dimers (R2).

It catalyses the reaction carbamoyl phosphate + L-aspartate = N-carbamoyl-L-aspartate + phosphate + H(+). It participates in pyrimidine metabolism; UMP biosynthesis via de novo pathway; (S)-dihydroorotate from bicarbonate: step 2/3. Functionally, catalyzes the condensation of carbamoyl phosphate and aspartate to form carbamoyl aspartate and inorganic phosphate, the committed step in the de novo pyrimidine nucleotide biosynthesis pathway. The protein is Aspartate carbamoyltransferase catalytic subunit of Wigglesworthia glossinidia brevipalpis.